The primary structure comprises 596 residues: Selenocysteine-specific elongation factor (596 aa).

Positions 5–217 (RVNVNVGVLG…LLTSQISIPT (213 aa)) constitute a tr-type G domain. The interval 14 to 21 (GHIDSGKT) is G1. GDP contacts are provided by G19, T21, and A22. The GTP site is built by G19, T21, and A22. T21 contacts Mg(2+). The interval 46–50 (GITLD) is G2. Mg(2+) contacts are provided by T48 and D92. Residues 92–95 (DCPG) form a G3 region. The G4 stretch occupies residues 146–149 (NKID). Residues D149 and K187 each contribute to the GDP site. GTP-binding residues include D149 and K187. The interval 185-187 (AAK) is G5. Phosphoserine is present on S537. T545 carries the phosphothreonine modification. The Nuclear localization signal motif lies at 547 to 553 (ALKKRAR). The segment at 548-573 (LKKRARAGRGEATRQEESAERSEPSQ) is disordered. Positions 555-571 (GRGEATRQEESAERSEP) are enriched in basic and acidic residues. Omega-N-methylarginine is present on R556.

The protein belongs to the TRAFAC class translation factor GTPase superfamily. Classic translation factor GTPase family. SelB subfamily. Mg(2+) is required as a cofactor. It depends on Mn(2+) as a cofactor.

Its subcellular location is the cytoplasm. The protein localises to the nucleus. It carries out the reaction GTP + H2O = GDP + phosphate + H(+). Its function is as follows. Translation factor required for the incorporation of the rare amino acid selenocysteine encoded by UGA codons. Replaces the eRF1-eRF3-GTP ternary complex for the insertion of selenocysteine directed by the UGA codon. Insertion of selenocysteine at UGA codons is mediated by SECISBP2 and EEFSEC: SECISBP2 (1) specifically binds the SECIS sequence once the 80S ribosome encounters an in-frame UGA codon and (2) contacts the RPS27A/eS31 of the 40S ribosome before ribosome stalling. (3) GTP-bound EEFSEC then delivers selenocysteinyl-tRNA(Sec) to the 80S ribosome and adopts a preaccommodated state conformation. (4) After GTP hydrolysis, EEFSEC dissociates from the assembly, selenocysteinyl-tRNA(Sec) accommodates, and peptide bond synthesis and selenoprotein elongation occur. This chain is Selenocysteine-specific elongation factor, found in Homo sapiens (Human).